Here is a 160-residue protein sequence, read N- to C-terminus: Ribosomal RNA large subunit methyltransferase H (160 aa).

2 residues coordinate S-adenosyl-L-methionine: Leu-76 and Gly-108.

Belongs to the RNA methyltransferase RlmH family. Homodimer.

It is found in the cytoplasm. The catalysed reaction is pseudouridine(1915) in 23S rRNA + S-adenosyl-L-methionine = N(3)-methylpseudouridine(1915) in 23S rRNA + S-adenosyl-L-homocysteine + H(+). Specifically methylates the pseudouridine at position 1915 (m3Psi1915) in 23S rRNA. The chain is Ribosomal RNA large subunit methyltransferase H from Xanthobacter autotrophicus (strain ATCC BAA-1158 / Py2).